A 1103-amino-acid chain; its full sequence is Voltage-dependent calcium channel subunit alpha-2/delta-1 (1103 aa).

An N-terminal signal peptide occupies residues 1–24; that stretch reads MAAGCLLALTLTLFQSLLIGPSSE. Over 25 to 1073 the chain is Extracellular; that stretch reads EPFPSAVTIK…VLEDYTDCGG (1049 aa). N92 carries N-linked (GlcNAc...) asparagine glycosylation. A Phosphoserine modification is found at S119. N136 and N184 each carry an N-linked (GlcNAc...) asparagine glycan. The VWFA domain occupies 253–430; sequence DMLILVDVSG…INTQEYLDVL (178 aa). Positions 259, 261, and 263 each coordinate a divalent metal cation. The MIDAS-like motif signature appears at 259-263; that stretch reads DVSGS. N-linked (GlcNAc...) asparagine glycans are attached at residues N324, N348, N468, N475, N604, N613, N675, N781, N824, N888, N895, N985, and N998. C404 and C1059 are disulfide-bonded. In terms of domain architecture, Cache spans 446–556; sequence WTNVYLDALE…NIQNPKSQEP (111 aa). Residues 1074–1094 traverse the membrane as a helical segment; it reads VSGLNPSLWYIIGIQFLLLWL. Over 1095 to 1103 the chain is Cytoplasmic; that stretch reads VSGSTHRLL.

The protein belongs to the calcium channel subunit alpha-2/delta family. As to quaternary structure, dimer formed of alpha-2-1 and delta-1 chains; disulfide-linked. Voltage-dependent calcium channels are multisubunit complexes, consisting of alpha-1 (CACNA1), alpha-2 (CACNA2D), beta (CACNB) and delta (CACNA2D) subunits in a 1:1:1:1 ratio. In terms of processing, proteolytically processed into subunits alpha-2-1 and delta-1 that are disulfide-linked. Isoform 1 is expressed in skeletal muscle. Isoform 2 is expressed in the central nervous system. Isoform 2, isoform 4 and isoform 5 are expressed in neuroblastoma cells. Isoform 3, isoform 4 and isoform 5 are expressed in the aorta.

Its subcellular location is the membrane. It is found in the cell membrane. In terms of biological role, the alpha-2/delta subunit of voltage-dependent calcium channels regulates calcium current density and activation/inactivation kinetics of the calcium channel. Plays an important role in excitation-contraction coupling. The chain is Voltage-dependent calcium channel subunit alpha-2/delta-1 (CACNA2D1) from Homo sapiens (Human).